Consider the following 205-residue polypeptide: Cell wall / vacuolar inhibitor of fructosidase 1 (205 aa).

Residues 1 to 23 (MKMMKVMMLIVMMMMVMVMVSEG) form the signal peptide. Cystine bridges form between Cys30–Cys39 and Cys93–Cys134. Asn139 and Asn156 each carry an N-linked (GlcNAc...) asparagine glycan.

This sequence belongs to the PMEI family. In terms of tissue distribution, mostly expressed in roots, senescent leaves and flowers (in sepals), and, to a lower extent, in stems, specifically in the vascular tissues (e.g. in the phloem).

Its subcellular location is the vacuole. Inhibits fructosidases from vacuoles (vacuolar invertase VI). This is Cell wall / vacuolar inhibitor of fructosidase 1 (C/VIF1) from Arabidopsis thaliana (Mouse-ear cress).